Here is a 367-residue protein sequence, read N- to C-terminus: NADH-quinone oxidoreductase subunit D (367 aa).

This sequence belongs to the complex I 49 kDa subunit family. As to quaternary structure, NDH-1 is composed of 14 different subunits. Subunits NuoB, C, D, E, F, and G constitute the peripheral sector of the complex.

The protein localises to the cell membrane. It catalyses the reaction a quinone + NADH + 5 H(+)(in) = a quinol + NAD(+) + 4 H(+)(out). Its function is as follows. NDH-1 shuttles electrons from NADH, via FMN and iron-sulfur (Fe-S) centers, to quinones in the respiratory chain. The immediate electron acceptor for the enzyme in this species is believed to be ubiquinone. Couples the redox reaction to proton translocation (for every two electrons transferred, four hydrogen ions are translocated across the cytoplasmic membrane), and thus conserves the redox energy in a proton gradient. The polypeptide is NADH-quinone oxidoreductase subunit D (Dehalococcoides mccartyi (strain ATCC BAA-2100 / JCM 16839 / KCTC 5957 / BAV1)).